A 1072-amino-acid polypeptide reads, in one-letter code: DNA-directed RNA polymerase subunit beta (1072 aa).

This sequence belongs to the RNA polymerase beta chain family. In plastids the minimal PEP RNA polymerase catalytic core is composed of four subunits: alpha, beta, beta', and beta''. When a (nuclear-encoded) sigma factor is associated with the core the holoenzyme is formed, which can initiate transcription.

The protein resides in the plastid. Its subcellular location is the chloroplast. The catalysed reaction is RNA(n) + a ribonucleoside 5'-triphosphate = RNA(n+1) + diphosphate. Functionally, DNA-dependent RNA polymerase catalyzes the transcription of DNA into RNA using the four ribonucleoside triphosphates as substrates. This chain is DNA-directed RNA polymerase subunit beta, found in Oenothera elata subsp. hookeri (Hooker's evening primrose).